We begin with the raw amino-acid sequence, 226 residues long: Deoxyribose-phosphate aldolase (226 aa).

Asp-95 functions as the Proton donor/acceptor in the catalytic mechanism. Residue Lys-157 is the Schiff-base intermediate with acetaldehyde of the active site. Lys-186 functions as the Proton donor/acceptor in the catalytic mechanism.

The protein belongs to the DeoC/FbaB aldolase family. DeoC type 1 subfamily.

The protein resides in the cytoplasm. It catalyses the reaction 2-deoxy-D-ribose 5-phosphate = D-glyceraldehyde 3-phosphate + acetaldehyde. The protein operates within carbohydrate degradation; 2-deoxy-D-ribose 1-phosphate degradation; D-glyceraldehyde 3-phosphate and acetaldehyde from 2-deoxy-alpha-D-ribose 1-phosphate: step 2/2. Its activity is regulated as follows. Partially inhibited by acetaldehyde. After incubation for 2, 4 and 6 hours in 300 mM acetaldehyde at 25 degrees Celsius, retains approximately 61.32%, 42.33% and 34.73% of the initial 2-deoxy-D-ribose-5-phosphate (DR5P) cleavage activity, respectively. In terms of biological role, catalyzes a reversible aldol reaction between acetaldehyde and D-glyceraldehyde 3-phosphate to generate 2-deoxy-D-ribose 5-phosphate. Functionally, in vitro, DERA can catalyze the aldol condensation of chloroacetaldehyde (CHAD) and acetaldehyde (ACD), yielding (S)-4-chloro-3-hydroxybutanal ((S)-CHB), which can combine with another aldehyde to form (3R,5S)-6-chloro-2,4,6-trideoxyhexapyranose (CTeHP), a key intermediate for statin drugs. This Pseudomonas syringae pv. syringae (strain B728a) protein is Deoxyribose-phosphate aldolase.